Consider the following 235-residue polypeptide: Carboxy-S-adenosyl-L-methionine synthase (235 aa).

S-adenosyl-L-methionine-binding positions include Tyr-35, 60–62 (GCS), 83–84 (DN), Asn-124, and Arg-191.

Belongs to the class I-like SAM-binding methyltransferase superfamily. Cx-SAM synthase family. As to quaternary structure, homodimer.

It carries out the reaction prephenate + S-adenosyl-L-methionine = carboxy-S-adenosyl-L-methionine + 3-phenylpyruvate + H2O. Functionally, catalyzes the conversion of S-adenosyl-L-methionine (SAM) to carboxy-S-adenosyl-L-methionine (Cx-SAM). The protein is Carboxy-S-adenosyl-L-methionine synthase of Campylobacter jejuni subsp. jejuni serotype O:6 (strain 81116 / NCTC 11828).